Here is a 92-residue protein sequence, read N- to C-terminus: UPF0223 protein SZO_10560 (92 aa).

It belongs to the UPF0223 family.

This is UPF0223 protein SZO_10560 from Streptococcus equi subsp. zooepidemicus (strain H70).